We begin with the raw amino-acid sequence, 345 residues long: Holliday junction branch migration complex subunit RuvB (345 aa).

Residues 1 to 182 (MQRLVEVESV…FGMHFRMQFY (182 aa)) form a large ATPase domain (RuvB-L) region. ATP is bound by residues Leu21, Arg22, Gly63, Lys66, Thr67, Thr68, 129 to 131 (EDY), Arg172, Tyr182, and Arg219. Residue Thr67 coordinates Mg(2+). A small ATPAse domain (RuvB-S) region spans residues 183 to 253 (TEIELAKIIQ…RCKYALDELG (71 aa)). The interval 256-345 (ESGFDEMDIN…EDDLTQGKLF (90 aa)) is head domain (RuvB-H). DNA-binding residues include Arg310 and Arg315.

This sequence belongs to the RuvB family. In terms of assembly, homohexamer. Forms an RuvA(8)-RuvB(12)-Holliday junction (HJ) complex. HJ DNA is sandwiched between 2 RuvA tetramers; dsDNA enters through RuvA and exits via RuvB. An RuvB hexamer assembles on each DNA strand where it exits the tetramer. Each RuvB hexamer is contacted by two RuvA subunits (via domain III) on 2 adjacent RuvB subunits; this complex drives branch migration. In the full resolvosome a probable DNA-RuvA(4)-RuvB(12)-RuvC(2) complex forms which resolves the HJ.

The protein resides in the cytoplasm. The enzyme catalyses ATP + H2O = ADP + phosphate + H(+). Functionally, the RuvA-RuvB-RuvC complex processes Holliday junction (HJ) DNA during genetic recombination and DNA repair, while the RuvA-RuvB complex plays an important role in the rescue of blocked DNA replication forks via replication fork reversal (RFR). RuvA specifically binds to HJ cruciform DNA, conferring on it an open structure. The RuvB hexamer acts as an ATP-dependent pump, pulling dsDNA into and through the RuvAB complex. RuvB forms 2 homohexamers on either side of HJ DNA bound by 1 or 2 RuvA tetramers; 4 subunits per hexamer contact DNA at a time. Coordinated motions by a converter formed by DNA-disengaged RuvB subunits stimulates ATP hydrolysis and nucleotide exchange. Immobilization of the converter enables RuvB to convert the ATP-contained energy into a lever motion, pulling 2 nucleotides of DNA out of the RuvA tetramer per ATP hydrolyzed, thus driving DNA branch migration. The RuvB motors rotate together with the DNA substrate, which together with the progressing nucleotide cycle form the mechanistic basis for DNA recombination by continuous HJ branch migration. Branch migration allows RuvC to scan DNA until it finds its consensus sequence, where it cleaves and resolves cruciform DNA. The chain is Holliday junction branch migration complex subunit RuvB from Aliarcobacter butzleri (strain RM4018) (Arcobacter butzleri).